We begin with the raw amino-acid sequence, 225 residues long: Ribonuclease HII (225 aa).

In terms of domain architecture, RNase H type-2 spans 35-225 (GLVAGVDEVG…SFRPCQISLD (191 aa)). A divalent metal cation is bound by residues Asp-41, Glu-42, and Asp-137.

The protein belongs to the RNase HII family. The cofactor is Mn(2+). It depends on Mg(2+) as a cofactor.

It localises to the cytoplasm. The enzyme catalyses Endonucleolytic cleavage to 5'-phosphomonoester.. Its function is as follows. Endonuclease that specifically degrades the RNA of RNA-DNA hybrids. The chain is Ribonuclease HII from Trichormus variabilis (strain ATCC 29413 / PCC 7937) (Anabaena variabilis).